Here is a 246-residue protein sequence, read N- to C-terminus: Peroxisomal membrane protein 11A (246 aa).

Residues 1-93 are Cytoplasmic-facing; sequence MDAFIRVANQ…LCLTLANLNR (93 aa). The chain crosses the membrane as a helical span at residues 94-114; that stretch reads VVYYICDTVLWAKSVGLTSGV. Over 115–217 the chain is Lumenal; sequence NREKWQRWAA…LNQLGIYKSN (103 aa). The helical transmembrane segment at 218–238 threads the bilayer; that stretch reads LGVVGLGGLISSLAGLLTVVY. Positions 218 to 238 are required for homodimerization, interaction with PEX11G, and peroxisomal localization; the sequence is LGVVGLGGLISSLAGLLTVVY. Residues 239–246 are Cytoplasmic-facing; the sequence is PQLKLKAR.

Belongs to the peroxin-11 family. Homodimer. Heterodimer with PEX11G. Probably interacts with COPB2 and COPA. Interacts with PEX19. Interacts with FIS1. Strongly expressed in liver and at lower levels in heart, brain, kidney and testis.

It is found in the peroxisome membrane. In terms of biological role, may be involved in peroxisomal proliferation and may regulate peroxisomes division. May mediate binding of coatomer proteins to the peroxisomal membrane. Promotes membrane protrusion and elongation on the peroxisomal surface. This Mus musculus (Mouse) protein is Peroxisomal membrane protein 11A (Pex11a).